A 368-amino-acid chain; its full sequence is Alanine racemase (368 aa).

Catalysis depends on lysine 40, which acts as the Proton acceptor; specific for D-alanine. At lysine 40 the chain carries N6-(pyridoxal phosphate)lysine. Arginine 134 is a substrate binding site. The active-site Proton acceptor; specific for L-alanine is tyrosine 263. A substrate-binding site is contributed by methionine 310.

The protein belongs to the alanine racemase family. It depends on pyridoxal 5'-phosphate as a cofactor.

It carries out the reaction L-alanine = D-alanine. It participates in amino-acid biosynthesis; D-alanine biosynthesis; D-alanine from L-alanine: step 1/1. In terms of biological role, catalyzes the interconversion of L-alanine and D-alanine. May also act on other amino acids. This Listeria monocytogenes serotype 1/2a (strain 10403S) protein is Alanine racemase (alr).